A 637-amino-acid polypeptide reads, in one-letter code: Serine/threonine-protein kinase Nek11 (637 aa).

Residues 29 to 287 (YVLQQKLGSG…AIEILKIPYI (259 aa)) form the Protein kinase domain. Residues 35-43 (LGSGSFGTV) and Lys61 contribute to the ATP site. Residue Asp158 is the Proton acceptor of the active site. A Phosphoserine; by CHEK1 modification is found at Ser273. Residues 302–385 (TLEDKNLDCQ…QELRSRNFQQ (84 aa)) adopt a coiled-coil conformation. Positions 399-446 (GMEEKEEQPEGRPSCSPQDEDEERWQDREEEFDEPTLENLSEPQPIPS) are disordered. Acidic residues predominate over residues 416–434 (QDEDEERWQDREEEFDEPT).

It belongs to the protein kinase superfamily. NEK Ser/Thr protein kinase family. NIMA subfamily. Interacts with NEK2. The cofactor is Mn(2+). It depends on Mg(2+) as a cofactor. Post-translationally, phosphorylated by NEK2. Phosphorylation at Ser-273 is important for its activation.

It localises to the nucleus. The protein localises to the nucleolus. The enzyme catalyses L-seryl-[protein] + ATP = O-phospho-L-seryl-[protein] + ADP + H(+). It catalyses the reaction L-threonyl-[protein] + ATP = O-phospho-L-threonyl-[protein] + ADP + H(+). Its activity is regulated as follows. Autorepressed by intramolecular binding of the C-terminus which dissociates following phosphorylation by NEK2. Activated in response to DNA damage. Inhibited by zinc. Functionally, protein kinase which plays an important role in the G2/M checkpoint response to DNA damage. Controls degradation of CDC25A by directly phosphorylating it on residues whose phosphorylation is required for BTRC-mediated polyubiquitination and degradation. The sequence is that of Serine/threonine-protein kinase Nek11 (NEK11) from Macaca fascicularis (Crab-eating macaque).